Consider the following 413-residue polypeptide: Probable alpha-amylase 2 (413 aa).

Substrate contacts are provided by residues 74–75 (YL) and 191–196 (RFDFAR). Residue Asp-193 is the Nucleophile of the active site. Glu-218 serves as the catalytic Proton donor. Residues Trp-220, Ser-222, Gln-239, Asp-246, Lys-280, 286-288 (GWW), His-299, Gln-305, Lys-386, and Trp-411 contribute to the substrate site.

Belongs to the glycosyl hydrolase 13 family. The cofactor is Ca(2+). As to expression, expressed in developing siliques.

It localises to the cytoplasm. It is found in the cytosol. The catalysed reaction is Endohydrolysis of (1-&gt;4)-alpha-D-glucosidic linkages in polysaccharides containing three or more (1-&gt;4)-alpha-linked D-glucose units.. Functionally, probable alpha-amylase that does not seem to be required for breakdown of transitory starch in leaves. In Arabidopsis thaliana (Mouse-ear cress), this protein is Probable alpha-amylase 2 (AMY2).